Consider the following 623-residue polypeptide: Interferon-induced GTP-binding protein Mx3 (623 aa).

One can recognise a Dynamin-type G domain in the interval 31–304; it reads DLALPAIAVI…LVHHIEKSLP (274 aa). Positions 41–48 are G1 motif; sequence GDQSSGKS. 41–48 contacts GTP; it reads GDQSSGKS. Residues 66–68 form a G2 motif region; sequence VTR. The G3 motif stretch occupies residues 142 to 145; it reads DLPG. GTP is bound by residues 142–146 and 211–214; these read DLPGI and TKPD. Residues 211-214 are G4 motif; that stretch reads TKPD. Residues 243–246 are G5 motif; sequence KCRG. In terms of domain architecture, GED spans 537-623; that stretch reads LQEMMLHLKS…MKARSYLVEF (87 aa).

This sequence belongs to the TRAFAC class dynamin-like GTPase superfamily. Dynamin/Fzo/YdjA family.

The protein resides in the cytoplasm. In terms of biological role, does not inhibit strain RB-1 of the fish pathogen, infectious hematopoietic necrosis virus (IHNV). The chain is Interferon-induced GTP-binding protein Mx3 from Oncorhynchus mykiss (Rainbow trout).